Consider the following 523-residue polypeptide: DNA-directed primase/polymerase protein (523 aa).

Residues Arg78, 117 to 119 (DLE), and 168 to 172 (KFSHH) each bind substrate. Residues Asp117 and Glu119 each contribute to the Mn(2+) site. Positions 203-230 (LKKSNPEAPGENRDDVEGTQAKRRKTEE) are disordered. Substrate-binding positions include 258–261 (RNFR) and Lys267. Cys390, His397, Cys417, and Cys422 together coordinate Zn(2+). Residues 390-423 (CHNVKRFHKSNNIIIVVDLKEEVWYQKCHDPECR) carry the Zinc knuckle motif motif. Residues 467–477 (APAESTSTTPS) show a composition bias toward low complexity. The tract at residues 467-523 (APAESTSTTPSEDTEGWGDWPDDPAYLRALQEVEEEEEDEDEEVPDELLLQAVNECE) is disordered. Composition is skewed to acidic residues over residues 478–488 (EDTEGWGDWPD) and 498–512 (EVEE…EVPD).

It belongs to the eukaryotic-type primase small subunit family. The cofactor is Mn(2+).

It localises to the nucleus. The protein localises to the mitochondrion matrix. It is found in the chromosome. It catalyses the reaction ssDNA + n NTP = ssDNA/pppN(pN)n-1 hybrid + (n-1) diphosphate.. The catalysed reaction is DNA(n) + a 2'-deoxyribonucleoside 5'-triphosphate = DNA(n+1) + diphosphate. Its function is as follows. DNA primase and DNA polymerase required to tolerate replication-stalling lesions by bypassing them. Required to facilitate mitochondrial and nuclear replication fork progression by initiating de novo DNA synthesis using dNTPs and acting as an error-prone DNA polymerase able to bypass certain DNA lesions. Shows a high capacity to tolerate DNA damage lesions such as 8oxoG and abasic sites in DNA. Provides different translesion synthesis alternatives when DNA replication is stalled: able to synthesize DNA primers downstream of lesions, such as UV lesions, R-loops and G-quadruplexes, to allow DNA replication to continue. Can also realign primers ahead of 'unreadable lesions' such as abasic sites and 6-4 photoproduct (6-4 pyrimidine-pyrimidinone), thereby skipping the lesion. Repriming avoids fork degradation while leading to accumulation of internal ssDNA gaps behind the forks. Also able to incorporate nucleotides opposite DNA lesions such as 8oxoG, like a regular translesion synthesis DNA polymerase. Also required for reinitiating stalled forks after ultraviolet (UV) damage during nuclear DNA replication. Required for mitochondrial DNA (mtDNA) synthesis and replication, by reinitiating synthesis after UV damage or in the presence of chain-terminating nucleotides. In addition to its role in DNA damage response, also required to maintain efficient nuclear and mitochondrial DNA replication in unperturbed cells. The protein is DNA-directed primase/polymerase protein of Danio rerio (Zebrafish).